The chain runs to 138 residues: Small ribosomal subunit protein uS11c (138 aa).

Residues 1-21 (MTKSIPRIGSRRGGRIASRKN) are disordered. The segment covering 9-21 (GSRRGGRIASRKN) has biased composition (basic residues).

This sequence belongs to the universal ribosomal protein uS11 family. Part of the 30S ribosomal subunit.

It localises to the plastid. Its subcellular location is the chloroplast. This is Small ribosomal subunit protein uS11c from Calycanthus floridus var. glaucus (Eastern sweetshrub).